The following is a 129-amino-acid chain: Protein Turandot A2 (129 aa).

The signal sequence occupies residues 1–21 (MNSSTSLMCFALLLISPLCMG). The N-linked (GlcNAc...) asparagine glycan is linked to asparagine 49.

It belongs to the Turandot family.

It is found in the secreted. Its function is as follows. A humoral factor that plays a role in stress tolerance; gives increased resistance to the lethal effects of bacterial challenge and stress. Regulated by the JAK/STAT pathway and NF-KB-like Relish pathway in the fat body, upd3 in the hemocytes and Mekk1 in response to septic injury and consequent immune response. The chain is Protein Turandot A2 (TotA2) from Drosophila simulans (Fruit fly).